A 296-amino-acid chain; its full sequence is Protease HtpX homolog (296 aa).

2 helical membrane-spanning segments follow: residues 14-34 (VVLLIVFFCLLAAIGAAVGYL) and 39-59 (YQFGLVLALIIGVIYAVSMIF). His-143 serves as a coordination point for Zn(2+). Glu-144 is an active-site residue. Residue His-147 participates in Zn(2+) binding. The next 2 membrane-spanning stretches (helical) occupy residues 158 to 178 (IAVALASAVTLISSIGSRMLF) and 195 to 215 (ILVLIFSILSLILAPLAASLV). Glu-224 lines the Zn(2+) pocket.

It belongs to the peptidase M48B family. The cofactor is Zn(2+).

It is found in the cell membrane. This is Protease HtpX homolog from Streptococcus agalactiae serotype III (strain NEM316).